Consider the following 447-residue polypeptide: Chromosomal replication initiator protein DnaA (447 aa).

Residues 1–66 (MSNRIISILK…SKAIKEAYGK (66 aa)) are domain I, interacts with DnaA modulators. Positions 66–102 (KNLDYEIVYETTEPEAFNKSNESYKGPLVKKKPLLIS) are domain II. Residues 103-319 (NLNANYTFEN…GVIIKLIVQS (217 aa)) are domain III, AAA+ region. 4 residues coordinate ATP: Gly146, Gly148, Lys149, and Thr150. Residues 320–447 (SINKERIGAA…NTMATSSAAG (128 aa)) are domain IV, binds dsDNA.

This sequence belongs to the DnaA family. Oligomerizes as a right-handed, spiral filament on DNA at oriC.

The protein localises to the cytoplasm. In terms of biological role, plays an essential role in the initiation and regulation of chromosomal replication. ATP-DnaA binds to the origin of replication (oriC) to initiate formation of the DNA replication initiation complex once per cell cycle. Binds the DnaA box (a 9 base pair repeat at the origin) and separates the double-stranded (ds)DNA. Forms a right-handed helical filament on oriC DNA; dsDNA binds to the exterior of the filament while single-stranded (ss)DNA is stabiized in the filament's interior. The ATP-DnaA-oriC complex binds and stabilizes one strand of the AT-rich DNA unwinding element (DUE), permitting loading of DNA polymerase. After initiation quickly degrades to an ADP-DnaA complex that is not apt for DNA replication. Binds acidic phospholipids. This chain is Chromosomal replication initiator protein DnaA, found in Kosmotoga olearia (strain ATCC BAA-1733 / DSM 21960 / TBF 19.5.1).